The primary structure comprises 55 residues: uncharacterized protein (55 aa).

The span at 1-15 (MVGQEQLESSPLCQH) shows a compositional bias: polar residues. Positions 1–26 (MVGQEQLESSPLCQHSDNETETKREC) are disordered. Basic and acidic residues predominate over residues 16 to 26 (SDNETETKREC).

This is an uncharacterized protein from Escherichia coli (strain K12).